Reading from the N-terminus, the 360-residue chain is (+)-6a-hydroxymaackiain 3-O-methyltransferase 2 (360 aa).

Residues 202-205, D226, 226-227, 246-247, and K260 each bind S-adenosyl-L-methionine; these read VAGG, DQ, and DM. H264 serves as the catalytic Proton acceptor.

It belongs to the class I-like SAM-binding methyltransferase superfamily. Cation-independent O-methyltransferase family. COMT subfamily.

The catalysed reaction is (+)-6a-hydroxymaackiain + S-adenosyl-L-methionine = (+)-pisatin + S-adenosyl-L-homocysteine + H(+). In terms of biological role, 3-O-methyltransferase involved in the phytoalexin pisatin biosynthesis. Can use (+)-6a-hydroxymaackiain, (+)-maackiain and with a lower activity (+)-medicarpin and 2,7,4'-trihydroxyisoflavanone as substrates, but not (-)-6a-hydroxymaackiain, daidzein, formononetin or isoliquiritigenin. In Pisum sativum (Garden pea), this protein is (+)-6a-hydroxymaackiain 3-O-methyltransferase 2 (HMM2).